We begin with the raw amino-acid sequence, 291 residues long: UPF0276 protein VV3194 (291 aa).

It belongs to the UPF0276 family.

The protein is UPF0276 protein VV3194 of Vibrio vulnificus (strain YJ016).